We begin with the raw amino-acid sequence, 106 residues long: Large ribosomal subunit protein bL21 (106 aa).

Belongs to the bacterial ribosomal protein bL21 family. In terms of assembly, part of the 50S ribosomal subunit. Contacts protein L20.

In terms of biological role, this protein binds to 23S rRNA in the presence of protein L20. The chain is Large ribosomal subunit protein bL21 from Xanthomonas oryzae pv. oryzae (strain MAFF 311018).